The chain runs to 104 residues: DNA-directed RNA polymerase subunit omega (104 aa).

Residues 53–104 (EIESGNVTIHPDPEGKREAVRRRIEEEKRRKEEEEKKIKEQIAKEKEDGEKI) are disordered. A compositionally biased stretch (basic and acidic residues) spans 63–104 (PDPEGKREAVRRRIEEEKRRKEEEEKKIKEQIAKEKEDGEKI).

Belongs to the RNA polymerase subunit omega family. The RNAP catalytic core consists of 2 alpha, 1 beta, 1 beta' and 1 omega subunit. When a sigma factor is associated with the core the holoenzyme is formed, which can initiate transcription.

The catalysed reaction is RNA(n) + a ribonucleoside 5'-triphosphate = RNA(n+1) + diphosphate. In terms of biological role, promotes RNA polymerase assembly. Latches the N- and C-terminal regions of the beta' subunit thereby facilitating its interaction with the beta and alpha subunits. This chain is DNA-directed RNA polymerase subunit omega, found in Streptococcus pneumoniae serotype 2 (strain D39 / NCTC 7466).